Here is an 882-residue protein sequence, read N- to C-terminus: Leucine--tRNA ligase (882 aa).

The short motif at 43–53 (PYPSGNLHMGH) is the 'HIGH' region element. A 'KMSKS' region motif is present at residues 632-636 (TMSKS). Position 635 (Lys-635) interacts with ATP.

The protein belongs to the class-I aminoacyl-tRNA synthetase family.

Its subcellular location is the cytoplasm. It catalyses the reaction tRNA(Leu) + L-leucine + ATP = L-leucyl-tRNA(Leu) + AMP + diphosphate. In Synechococcus sp. (strain JA-2-3B'a(2-13)) (Cyanobacteria bacterium Yellowstone B-Prime), this protein is Leucine--tRNA ligase.